A 340-amino-acid polypeptide reads, in one-letter code: DNA-directed RNA polymerase subunit alpha (340 aa).

Residues 1–236 (MLSLSKNWNT…EQLQLFISFE (236 aa)) are alpha N-terminal domain (alpha-NTD). The alpha C-terminal domain (alpha-CTD) stretch occupies residues 251 to 340 (FAPYLLKRVD…LSKRYEDSYN (90 aa)).

Belongs to the RNA polymerase alpha chain family. As to quaternary structure, homodimer. The RNAP catalytic core consists of 2 alpha, 1 beta, 1 beta' and 1 omega subunit. When a sigma factor is associated with the core the holoenzyme is formed, which can initiate transcription.

It catalyses the reaction RNA(n) + a ribonucleoside 5'-triphosphate = RNA(n+1) + diphosphate. In terms of biological role, DNA-dependent RNA polymerase catalyzes the transcription of DNA into RNA using the four ribonucleoside triphosphates as substrates. The sequence is that of DNA-directed RNA polymerase subunit alpha from Rickettsia peacockii (strain Rustic).